The sequence spans 236 residues: Purine nucleoside phosphorylase DeoD-type (236 aa).

Residue His-4 participates in a purine D-ribonucleoside binding. Phosphate contacts are provided by residues Gly-20, Arg-24, Arg-43, and 87–90 (RVGT). Residues 179-181 (EME) and 203-204 (SD) contribute to the a purine D-ribonucleoside site. Asp-204 functions as the Proton donor in the catalytic mechanism.

This sequence belongs to the PNP/UDP phosphorylase family. In terms of assembly, homohexamer; trimer of homodimers.

The catalysed reaction is a purine D-ribonucleoside + phosphate = a purine nucleobase + alpha-D-ribose 1-phosphate. It catalyses the reaction a purine 2'-deoxy-D-ribonucleoside + phosphate = a purine nucleobase + 2-deoxy-alpha-D-ribose 1-phosphate. In terms of biological role, catalyzes the reversible phosphorolytic breakdown of the N-glycosidic bond in the beta-(deoxy)ribonucleoside molecules, with the formation of the corresponding free purine bases and pentose-1-phosphate. This Streptococcus pneumoniae (strain CGSP14) protein is Purine nucleoside phosphorylase DeoD-type.